The sequence spans 35 residues: Fatty acid synthase (35 aa).

Ser-12 is an active-site residue.

As to quaternary structure, homodimer which is arranged in a head to tail fashion. Interacts with CEACAM1; this interaction is insulin and phosphorylation-dependent; reduces fatty-acid synthase activity.

Its subcellular location is the cytoplasm. It is found in the melanosome. The catalysed reaction is acetyl-CoA + n malonyl-CoA + 2n NADPH + 2n H(+) = a long-chain fatty acid + (n+1) CoA + n CO2 + 2n NADP(+).. Functionally, fatty acid synthetase catalyzes the formation of long-chain fatty acids from acetyl-CoA, malonyl-CoA and NADPH. This multifunctional protein has 7 catalytic activities as an acyl carrier protein. Its function is as follows. This fragment is from the acyltransferase domain of the fatty acid synthetase. This is Fatty acid synthase (FASN) from Capra hircus (Goat).